The primary structure comprises 233 residues: Small ribosomal subunit protein uS3 (233 aa).

In terms of domain architecture, KH type-2 spans Val-39–Arg-107.

The protein belongs to the universal ribosomal protein uS3 family. As to quaternary structure, part of the 30S ribosomal subunit. Forms a tight complex with proteins S10 and S14.

In terms of biological role, binds the lower part of the 30S subunit head. Binds mRNA in the 70S ribosome, positioning it for translation. This chain is Small ribosomal subunit protein uS3, found in Vibrio vulnificus (strain CMCP6).